The chain runs to 423 residues: COP9 signalosome complex subunit 3 (423 aa).

One can recognise a PCI domain in the interval 197-365 (NFERAMYFYE…GMVCFHDSPE (169 aa)). The span at 401–410 (PQFVQKSMGS) shows a compositional bias: polar residues. The interval 401 to 423 (PQFVQKSMGSQEDDSGSKPSSYS) is disordered.

Belongs to the CSN3 family. Component of the CSN complex, probably composed of cops1, cops2, cops3, cops4, cops5, cops6, cops7, cops8 and cops9.

The protein localises to the cytoplasm. It is found in the nucleus. In terms of biological role, component of the COP9 signalosome complex (CSN), a complex involved in various cellular and developmental processes. The CSN complex is an essential regulator of the ubiquitin (Ubl) conjugation pathway by mediating the deneddylation of the cullin subunits of E3 ligase complexes, leading to modify the Ubl ligase activity. The sequence is that of COP9 signalosome complex subunit 3 (cops3) from Xenopus laevis (African clawed frog).